A 170-amino-acid polypeptide reads, in one-letter code: Peptide deformylase-like (170 aa).

Glu-139 is an active-site residue.

It belongs to the polypeptide deformylase family.

The polypeptide is Peptide deformylase-like (Bradyrhizobium diazoefficiens (strain JCM 10833 / BCRC 13528 / IAM 13628 / NBRC 14792 / USDA 110)).